Here is a 160-residue protein sequence, read N- to C-terminus: Cytochrome b6-f complex subunit 4 (160 aa).

3 consecutive transmembrane segments (helical) span residues 36 to 56, 95 to 115, and 131 to 151; these read LLYV…GLSV, LLGV…PFIE, and LTFI…CVPI.

The protein belongs to the cytochrome b family. PetD subfamily. The 4 large subunits of the cytochrome b6-f complex are cytochrome b6, subunit IV (17 kDa polypeptide, petD), cytochrome f and the Rieske protein, while the 4 small subunits are petG, petL, petM and petN. The complex functions as a dimer.

It localises to the plastid. The protein resides in the chloroplast thylakoid membrane. Its function is as follows. Component of the cytochrome b6-f complex, which mediates electron transfer between photosystem II (PSII) and photosystem I (PSI), cyclic electron flow around PSI, and state transitions. The sequence is that of Cytochrome b6-f complex subunit 4 from Phaeodactylum tricornutum (strain CCAP 1055/1).